A 507-amino-acid polypeptide reads, in one-letter code: ATP synthase subunit alpha 2 (507 aa).

171-178 is a binding site for ATP; that stretch reads GDRATGKT.

It belongs to the ATPase alpha/beta chains family. As to quaternary structure, F-type ATPases have 2 components, CF(1) - the catalytic core - and CF(0) - the membrane proton channel. CF(1) has five subunits: alpha(3), beta(3), gamma(1), delta(1), epsilon(1). CF(0) has three main subunits: a(1), b(2) and c(9-12). The alpha and beta chains form an alternating ring which encloses part of the gamma chain. CF(1) is attached to CF(0) by a central stalk formed by the gamma and epsilon chains, while a peripheral stalk is formed by the delta and b chains.

The protein resides in the cell inner membrane. It carries out the reaction ATP + H2O + 4 H(+)(in) = ADP + phosphate + 5 H(+)(out). Its function is as follows. Produces ATP from ADP in the presence of a proton gradient across the membrane. The alpha chain is a regulatory subunit. This is ATP synthase subunit alpha 2 from Gluconobacter oxydans (strain 621H) (Gluconobacter suboxydans).